A 295-amino-acid chain; its full sequence is MLILPTVKGEYQKDYNLKHLTWFKVGGDAEIFFKPLDSEDLASFLIQNRQKLPITTFGAGSNIIIRDGGIEGVVIKLGQNFSNIEFIDNHLIVGSSCLNYNLAKFCQANDISGFEFLVGIPGTIGGGVAMNAGAYGSEFKDIIVRIEAIDFAGNFRTFTNAESGFKYRGNNLPKDLIILKAVFKVNKGDSENILLRMNEINNTRSLTQPIKERTGGSTFANPEGLKSWELIDKAGLRGYRIGGASMSELHCNFMINNGDATSKDLEDLGDFVRQKVFEDSGVELKWEIKIIGKYV.

An FAD-binding PCMH-type domain is found at 24–188 (KVGGDAEIFF…LKAVFKVNKG (165 aa)). The active site involves Arg-168. Ser-217 (proton donor) is an active-site residue. Glu-287 is a catalytic residue.

The protein belongs to the MurB family. It depends on FAD as a cofactor.

Its subcellular location is the cytoplasm. It carries out the reaction UDP-N-acetyl-alpha-D-muramate + NADP(+) = UDP-N-acetyl-3-O-(1-carboxyvinyl)-alpha-D-glucosamine + NADPH + H(+). The protein operates within cell wall biogenesis; peptidoglycan biosynthesis. Cell wall formation. This is UDP-N-acetylenolpyruvoylglucosamine reductase from Rickettsia akari (strain Hartford).